We begin with the raw amino-acid sequence, 185 residues long: Ribosome-recycling factor (185 aa).

This sequence belongs to the RRF family.

The protein resides in the cytoplasm. Functionally, responsible for the release of ribosomes from messenger RNA at the termination of protein biosynthesis. May increase the efficiency of translation by recycling ribosomes from one round of translation to another. The chain is Ribosome-recycling factor from Campylobacter jejuni (strain RM1221).